The following is a 260-amino-acid chain: Dehydrogenase/reductase SDR family member 11 (260 aa).

Residues 1–30 form the signal peptide; it reads MTRAGMERWRDRLALVTGASGGIGAAVARA. Residues 18-23, 43-44, glutamate 49, 70-71, and asparagine 97 contribute to the NADP(+) site; these read GASGGI, RT, and DL. Serine 151 and tyrosine 166 together coordinate substrate. NADP(+) is bound by residues tyrosine 166, lysine 170, 201 to 204, and lysine 208; that span reads VETQ. Tyrosine 166 (proton acceptor) is an active-site residue.

Belongs to the short-chain dehydrogenases/reductases (SDR) family. As to quaternary structure, homotetramer.

The protein localises to the secreted. The catalysed reaction is a 3beta-hydroxysteroid + NADP(+) = a 3-oxosteroid + NADPH + H(+). It catalyses the reaction 17beta-estradiol + NAD(+) = estrone + NADH + H(+). It carries out the reaction 17beta-estradiol + NADP(+) = estrone + NADPH + H(+). It functions in the pathway steroid biosynthesis; estrogen biosynthesis. Its activity is regulated as follows. Inhibited by flavonoids including apigenin, luteolin, genistein, kaempferol and quercetin and also by carbenoxolone, zearalenone, glycyrrhetinic, curcumin and flufenamic acid. Catalyzes the conversion of the 17-keto group of estrone, 4- and 5-androstenes and 5-alpha-androstanes into their 17-beta-hydroxyl metabolites and the conversion of the 3-keto group of 3-, 3,17- and 3,20- diketosteroids into their 3-hydroxyl metabolites. Exhibits reductive 3-beta-hydroxysteroid dehydrogenase activity toward 5-beta-androstanes, 5-beta-pregnanes, 4-pregnenes and bile acids. May also reduce endogenous and exogenous alpha-dicarbonyl compounds and xenobiotic alicyclic ketones. The sequence is that of Dehydrogenase/reductase SDR family member 11 (Dhrs11) from Mus musculus (Mouse).